Consider the following 41-residue polypeptide: Large ribosomal subunit protein bL36 (41 aa).

This sequence belongs to the bacterial ribosomal protein bL36 family.

The polypeptide is Large ribosomal subunit protein bL36 (Bartonella henselae (strain ATCC 49882 / DSM 28221 / CCUG 30454 / Houston 1) (Rochalimaea henselae)).